The chain runs to 558 residues: Atlastin-1 (558 aa).

Residues 1–28 (MAKNRRDRNSWGGFSEKTYEWSSEEEEP) are disordered. The segment at 1-34 (MAKNRRDRNSWGGFSEKTYEWSSEEEEPVKKAGP) is N-terminal hypervariable region (HVR). The Cytoplasmic portion of the chain corresponds to 1–449 (MAKNRRDRNS…NIFHAARTPA (449 aa)). 3 positions are modified to phosphoserine: serine 10, serine 22, and serine 23. Residues 64 to 309 (DKEVVAVSVA…LIPWLLSPES (246 aa)) enclose the GB1/RHD3-type G domain. Residues arginine 77, lysine 78, glycine 79, lysine 80, serine 81, phenylalanine 82, glutamine 148, arginine 217, aspartate 218, valine 276, and asparagine 279 each contribute to the GDP site. Residues arginine 77, lysine 78, glycine 79, lysine 80, serine 81, and phenylalanine 82 each coordinate GTP. Serine 81 provides a ligand contact to Mg(2+). Arginine 217, aspartate 218, and valine 276 together coordinate GTP. Positions 347–438 (MLQATAEANN…YIQYIKHNDS (92 aa)) are 3HB (three-helix bundle) domain. The residue at position 395 (lysine 395) is an N6-acetyllysine. Residues 418-439 (LQQLETEIDELYIQYIKHNDSK) adopt a coiled-coil conformation. Positions 439-447 (KNIFHAART) are linker. Residues 450 to 470 (TLFVVIFITYVIAGVTGFIGL) traverse the membrane as a helical segment. A topological domain (lumenal) is located at residue aspartate 471. Residues 472 to 492 (IIASLCNMIMGLTLITLCTWA) traverse the membrane as a helical segment. Residues 493–558 (YIRYSGEYRE…STEQSEKKKM (66 aa)) are Cytoplasmic-facing. Residues 521–558 (NEALYKLYSAAATHRHLYHQAFPAPKSESTEQSEKKKM) form an autoinhibitory domain region.

Belongs to the TRAFAC class dynamin-like GTPase superfamily. GB1/RHD3 GTPase family. GB1 subfamily. Monomeric and homodimeric. The homodimer, transiently formed by two molecules on opposing membranes, is the active form mediating ER membrane fusion. Interacts with REEP1, REEP5, RTN3 and RTN4 (via the transmembrane region); these proteins are involved in endoplasmic reticulum tubular network organization. Interacts with ZFYVE27; both proteins are involved in endoplasmic reticulum tubular network organization. Interacts with ARL6IP1; both proteins are involved in endoplasmic reticulum tubular network organization. Interacts with SPAST; the interaction is direct, could recruit SPAST to Golgi membranes. Interacts (via N-terminal region) with MAP4K4 (via CNH regulatory domain). May interact with TMED2. Interacts with CPT1C. Post-translationally, phosphorylated. Phosphorylation, by different kinases, of the N-terminal hypervariable region (HVR) regulates the ATL1-mediated membrane tethering step.

The protein localises to the endoplasmic reticulum membrane. It is found in the golgi apparatus membrane. The protein resides in the cell projection. It localises to the axon. It catalyses the reaction GTP + H2O = GDP + phosphate + H(+). Functionally, atlastin-1 (ATL1) is a membrane-anchored GTPase that mediates the GTP-dependent fusion of endoplasmic reticulum (ER) membranes, maintaining the continuous ER network. It facilitates the formation of three-way junctions where ER tubules intersect. Two atlastin-1 on neighboring ER tubules bind GTP and form loose homodimers through the GB1/RHD3-type G domains and 3HB regions. Upon GTP hydrolysis, the 3HB regions tighten, pulling the membranes together to drive their fusion. After fusion, the homodimer disassembles upon release of inorganic phosphate (Pi). Subsequently, GDP dissociates, resetting the monomers to a conformation ready for a new fusion cycle. May also regulate more or less directly Golgi biogenesis. Indirectly regulates axonal development. In Bos taurus (Bovine), this protein is Atlastin-1.